We begin with the raw amino-acid sequence, 292 residues long: MKQIAFYGKGGIGKSTTVCNIAAALADQGKKVMVVGCDPKHDCTSNLRGGQEIPTVLDILREKGLDKLGLETIIEKEMIEINDIIYEGYNGIYCVEAGGPKPGYGCAGRGVIVVIDLLKKMNLYKDLKLDIVLYDVLGDVVCGGFAMPLRMGLAEQIYVVTSSDYMAIYAANNICRGISEFVKRGGSKLGGLIYNVRGSMDAYDIINEFADKLGANIVGKVPNSHLIPEAEIEGKTVIEYDPNDEISQVYRELAKKIYENNEGTIPKPLENIEIMTIGKKIKERLKKERMKN.

8–15 contacts ATP; sequence GKGGIGKS. A [4Fe-4S] cluster-binding site is contributed by C106. At R109 the chain carries ADP-ribosylarginine; by dinitrogenase reductase ADP-ribosyltransferase. C142 contacts [4Fe-4S] cluster.

Belongs to the NifH/BchL/ChlL family. As to quaternary structure, homodimer. [4Fe-4S] cluster serves as cofactor. The reversible ADP-ribosylation of Arg-109 inactivates the nitrogenase reductase and regulates nitrogenase activity.

It catalyses the reaction N2 + 8 reduced [2Fe-2S]-[ferredoxin] + 16 ATP + 16 H2O = H2 + 8 oxidized [2Fe-2S]-[ferredoxin] + 2 NH4(+) + 16 ADP + 16 phosphate + 6 H(+). In terms of biological role, the key enzymatic reactions in nitrogen fixation are catalyzed by the nitrogenase complex, which has 2 components: the iron protein and the molybdenum-iron protein. The chain is Nitrogenase iron protein 2 (nifH2) from Methanothermococcus thermolithotrophicus (Methanococcus thermolithotrophicus).